Reading from the N-terminus, the 408-residue chain is Flavohemoprotein (408 aa).

Residues 1-138 enclose the Globin domain; it reads MLSEKTIRIV…LADIFIGREG (138 aa). Heme b is bound at residue H85. Residues Y95 and E137 each act as charge relay system in the active site. Residues 149 to 408 are reductase; it reads GGWNGTRTFV…FGPKEELVAV (260 aa). Residues 152–263 enclose the FAD-binding FR-type domain; that stretch reads NGTRTFVVTK…GPPCGEFTVD (112 aa). Residues Y190 and 205–208 each bind FAD; that span reads RNYS. An NADP(+)-binding site is contributed by 277 to 282; it reads GIGVTP. 398-401 is an FAD binding site; it reads FFGP.

It belongs to the globin family. Two-domain flavohemoproteins subfamily. In the C-terminal section; belongs to the flavoprotein pyridine nucleotide cytochrome reductase family. Requires heme b as cofactor. FAD serves as cofactor.

The enzyme catalyses 2 nitric oxide + NADPH + 2 O2 = 2 nitrate + NADP(+) + H(+). It carries out the reaction 2 nitric oxide + NADH + 2 O2 = 2 nitrate + NAD(+) + H(+). The polypeptide is Flavohemoprotein (Rhodopirellula baltica (strain DSM 10527 / NCIMB 13988 / SH1)).